The sequence spans 443 residues: GTPase Der (443 aa).

EngA-type G domains follow at residues 3–168 (PLLA…PEAP) and 178–353 (VHLA…RNRS). Residues 9-16 (GRPNVGKS), 56-60 (DTGGY), 120-123 (NKVE), 184-191 (GRPNVGKS), 231-235 (DTAGL), and 296-299 (NKWD) contribute to the GTP site. The KH-like domain maps to 354–438 (QNVSTSQLNK…PISLRFLHKN (85 aa)).

This sequence belongs to the TRAFAC class TrmE-Era-EngA-EngB-Septin-like GTPase superfamily. EngA (Der) GTPase family. As to quaternary structure, associates with the 50S ribosomal subunit.

In terms of biological role, GTPase that plays an essential role in the late steps of ribosome biogenesis. The polypeptide is GTPase Der (Chlorobium chlorochromatii (strain CaD3)).